The primary structure comprises 106 residues: MSTNNMSDPRRPNKVLRYKPPPSECNPALDDPTPDYMNLLGMIFSMCGLMLKLKWCAWVAVYCSFISFANSRSSEDTKQMMSSFMLSISAVVMSYLQNPQPMTPPW.

The tract at residues 1-29 is disordered; sequence MSTNNMSDPRRPNKVLRYKPPPSECNPAL. Position 2 is an N-acetylserine (S2). Residues 2-32 are Cytoplasmic-facing; the sequence is STNNMSDPRRPNKVLRYKPPPSECNPALDDP. The chain crosses the membrane as a helical span at residues 33-51; sequence TPDYMNLLGMIFSMCGLML. A topological domain (lumenal) is located at residue K52. Residues 53–70 form a helical membrane-spanning segment; the sequence is LKWCAWVAVYCSFISFAN. The Cytoplasmic portion of the chain corresponds to 71–74; it reads SRSS. A helical membrane pass occupies residues 75 to 95; the sequence is EDTKQMMSSFMLSISAVVMSY. Over 96–106 the chain is Lumenal; sequence LQNPQPMTPPW.

It belongs to the Asterix family. In terms of assembly, component of the PAT complex, composed of WDR83OS/Asterix and CCDC47. The PAT complex is part of the multi-pass translocon (MPT) complex, composed of three subcomplexes, the GEL complex (composed of RAB5IF/OPTI and TMCO1), the BOS complex (composed of NCLN/Nicalin, NOMO1 and TMEM147) and the PAT complex (composed of WDR83OS/Asterix and CCDC47). The MPT complex associates with the SEC61 complex.

It localises to the endoplasmic reticulum membrane. Its function is as follows. Component of the multi-pass translocon (MPT) complex that mediates insertion of multi-pass membrane proteins into the lipid bilayer of membranes. The MPT complex takes over after the SEC61 complex: following membrane insertion of the first few transmembrane segments of proteins by the SEC61 complex, the MPT complex occludes the lateral gate of the SEC61 complex to promote insertion of subsequent transmembrane regions. Within the MPT complex, the PAT subcomplex sequesters any highly polar regions in the transmembrane domains away from the non-polar membrane environment until they can be buried in the interior of the fully assembled protein. Within the PAT subcomplex, WDR83OS/Asterix binds to and redirects the substrate to a location behind the SEC61 complex. This is PAT complex subunit Asterix (WDR83OS) from Canis lupus familiaris (Dog).